Here is a 168-residue protein sequence, read N- to C-terminus: WAP four-disulfide core domain protein 2 (168 aa).

A signal peptide spans 1 to 30 (MPACRLCLLATGLLLGLLLFTPLSATGTRA). WAP domains follow at residues 31 to 74 (EKPG…SKPN) and 119 to 167 (NGEK…TTPK). 4 disulfide bridges follow: Cys-36–Cys-62, Cys-45–Cys-66, Cys-49–Cys-61, and Cys-55–Cys-70. The segment at 100 to 123 (PLSRGQVSTKPPVVTKEGGNGEKQ) is disordered. Disulfide bonds link Cys-126/Cys-154, Cys-137/Cys-158, Cys-141/Cys-153, and Cys-147/Cys-163.

Homotrimer; disulfide-linked.

It is found in the secreted. Its function is as follows. Broad range protease inhibitor. The sequence is that of WAP four-disulfide core domain protein 2 (Wfdc2) from Rattus norvegicus (Rat).